Reading from the N-terminus, the 469-residue chain is Glutamine synthetase (469 aa).

Residues 13–97 form the GS beta-grasp domain; sequence KEVRYVDLRF…LRCDIVEPAT (85 aa). Residues 105–469 form the GS catalytic domain; sequence PRSIAKRAEA…PVEFDMYYSL (365 aa). Residues glutamate 130 and glutamate 132 each coordinate Mg(2+). Glutamate 208 provides a ligand contact to ATP. The Mg(2+) site is built by glutamate 213 and glutamate 221. Residues 265–266 and glycine 266 each bind L-glutamate; that span reads NG. Histidine 270 is a Mg(2+) binding site. ATP contacts are provided by residues 272–274 and serine 274; that span reads HQS. Residues arginine 322, glutamate 328, and arginine 340 each coordinate L-glutamate. Residues arginine 340, arginine 345, and lysine 353 each contribute to the ATP site. Glutamate 358 is a Mg(2+) binding site. Residue arginine 360 participates in L-glutamate binding. Tyrosine 398 is subject to O-AMP-tyrosine.

This sequence belongs to the glutamine synthetase family. In terms of assembly, oligomer of 12 subunits arranged in the form of two hexameric ring. It depends on Mg(2+) as a cofactor.

The protein localises to the cytoplasm. It catalyses the reaction L-glutamate + NH4(+) + ATP = L-glutamine + ADP + phosphate + H(+). Its activity is regulated as follows. The activity of this enzyme could be controlled by adenylation under conditions of abundant glutamine. Its function is as follows. Catalyzes the ATP-dependent biosynthesis of glutamine from glutamate and ammonia. This chain is Glutamine synthetase, found in Methylococcus capsulatus (strain ATCC 33009 / NCIMB 11132 / Bath).